The chain runs to 395 residues: 3-sulfinopropanoyl-CoA desulfinase (395 aa).

Residues 121 to 124, serine 130, and 153 to 156 contribute to the FAD site; these read ICIS and YWIT. Substrate is bound at residue 243–244; the sequence is YN. Residues arginine 272, glutamine 339, serine 343, 366 to 370, and glutamine 387 contribute to the FAD site; that span reads GGTAQ.

Belongs to the acyl-CoA dehydrogenase family. As to quaternary structure, homotrimer or homotetramer. The cofactor is FAD.

It catalyses the reaction 3-sulfinopropanoyl-CoA + H2O = propanoyl-CoA + sulfite + H(+). Functionally, catalyzes the conversion 3-sulfinopropanoyl-CoA (3SP-CoA) to propanoyl-CoA by abstraction of sulfite. Does not show dehydrogenase activity. The polypeptide is 3-sulfinopropanoyl-CoA desulfinase (Cupriavidus necator (strain ATCC 43291 / DSM 13513 / CCUG 52238 / LMG 8453 / N-1) (Ralstonia eutropha)).